The chain runs to 176 residues: GTP-dependent dephospho-CoA kinase (176 aa).

Residues Asp47, Val48, Asp66, and Glu125 each coordinate GTP.

It belongs to the GTP-dependent DPCK family.

The enzyme catalyses 3'-dephospho-CoA + GTP = GDP + CoA + H(+). Its pathway is cofactor biosynthesis; coenzyme A biosynthesis. Catalyzes the GTP-dependent phosphorylation of the 3'-hydroxyl group of dephosphocoenzyme A to form coenzyme A (CoA). The sequence is that of GTP-dependent dephospho-CoA kinase from Methanocella arvoryzae (strain DSM 22066 / NBRC 105507 / MRE50).